Here is a 329-residue protein sequence, read N- to C-terminus: DNA-directed RNA polymerase subunit alpha (329 aa).

An alpha N-terminal domain (alpha-NTD) region spans residues 1 to 235 (MQGSVTEFLK…EQLDAFVDLR (235 aa)). The segment at 249-329 (FDPILLRPVD…NWPPASIAED (81 aa)) is alpha C-terminal domain (alpha-CTD).

This sequence belongs to the RNA polymerase alpha chain family. As to quaternary structure, homodimer. The RNAP catalytic core consists of 2 alpha, 1 beta, 1 beta' and 1 omega subunit. When a sigma factor is associated with the core the holoenzyme is formed, which can initiate transcription.

It carries out the reaction RNA(n) + a ribonucleoside 5'-triphosphate = RNA(n+1) + diphosphate. Its function is as follows. DNA-dependent RNA polymerase catalyzes the transcription of DNA into RNA using the four ribonucleoside triphosphates as substrates. The polypeptide is DNA-directed RNA polymerase subunit alpha (Histophilus somni (strain 129Pt) (Haemophilus somnus)).